The primary structure comprises 347 residues: MSDSESEEATKINTDPVDNAWSLKIPAFKETDNPHGMIEESSFATLFPKYREKYLKEVWPLVEQAVGEHHLKAELDLVEGSMVVKTTRKTWDPYIIIKARDMIKLMARSVPFEQAKRVLQDEIGCDIIKIGNLVQKKEKFVKRRQRLIGPNGATLKSIELLTDCYVLVQGNTVSALGPYKGLQQVRDIVLETMNNVHPIYNIKALMIKRELMKDPKLANEDWSRFLPKFKNKNLSKRKQPKVKKPKKEYTPFPPAQPESKIDKQLASGEYFLNKEQKQAKRQQERQTKQAEAAKKQDERRNKDFIPPTEEPPTGSKRKANDNDSSDSRVDVQSLKAKLLKANKKSKS.

Residues 124–194 (GCDIIKIGNL…VRDIVLETMN (71 aa)) enclose the KH domain. The segment covering 231 to 246 (NKNLSKRKQPKVKKPK) has biased composition (basic residues). Positions 231–347 (NKNLSKRKQP…LLKANKKSKS (117 aa)) are disordered. The stretch at 271 to 304 (FLNKEQKQAKRQQERQTKQAEAAKKQDERRNKDF) forms a coiled coil. 2 stretches are compositionally biased toward basic and acidic residues: residues 272-303 (LNKE…RNKD) and 318-329 (KANDNDSSDSRV). Basic residues predominate over residues 337–347 (KLLKANKKSKS).

This sequence belongs to the KRR1 family. Monomer. Component of the ribosomal small subunit (SSU) processome.

It localises to the nucleus. Its subcellular location is the nucleolus. Its function is as follows. Required for 40S ribosome biogenesis. Involved in nucleolar processing of pre-18S ribosomal RNA and ribosome assembly. Binds to RNA. Required for female germline development, cell viability during eye development and for survival of dividing cells and epithelial cells during early wing disk development. The protein is KRR1 small subunit processome component homolog of Drosophila willistoni (Fruit fly).